Consider the following 732-residue polypeptide: Protein FAR1-RELATED SEQUENCE 4 (732 aa).

Positions 11 to 97 (LFYKDYAKSV…VKEHNHDLLP (87 aa)) constitute an FAR1 domain. The MULE domain maps to 212-308 (VVSFETSYFV…CLWHVLDQLP (97 aa)). Residues 490–526 (YLVDWDEFKSDIYCSCRSFEYKGYLCRHAIVVLQMSG) form an SWIM-type zinc finger. Residues 623-683 (QEENQYGSTS…ETVGEGSQEG (61 aa)) are disordered. A compositionally biased stretch (polar residues) spans 624–635 (EENQYGSTSTQI).

This sequence belongs to the FHY3/FAR1 family. As to expression, expressed in hypocotyls, rosette and cauline leaves, inflorescences stems, flowers and siliques.

Its subcellular location is the nucleus. Its function is as follows. Putative transcription activator involved in regulating light control of development. This Arabidopsis thaliana (Mouse-ear cress) protein is Protein FAR1-RELATED SEQUENCE 4 (FRS4).